The sequence spans 1404 residues: Proteoglycan 4 (1404 aa).

A signal peptide spans 1–24 (MAWKTLPIYLLLLLSVFVIQQVSS). SMB domains follow at residues 26 to 69 (DLSS…AELS) and 66 to 108 (AELS…AEVH). Intrachain disulfides connect Cys-30–Cys-34, Cys-30–Cys-46, Cys-34–Cys-64, Cys-44–Cys-46, Cys-44–Cys-57, Cys-50–Cys-56, Cys-57–Cys-64, Cys-70–Cys-74, Cys-70–Cys-86, Cys-74–Cys-104, Cys-84–Cys-86, Cys-84–Cys-97, Cys-90–Cys-96, and Cys-97–Cys-104. The disordered stretch occupies residues 111–966 (TSPPSSKKAP…TTQVTSTTTQ (856 aa)). Residues Ser-123 and Ser-136 are each glycosylated (O-linked (GalNAc...) serine). Basic residues predominate over residues 132–146 (TTKRSPKPPNKKKTK). Low complexity predominate over residues 166-177 (SSSSSSSSSSSS). The segment covering 193-205 (ELQKKLKVKDNKK) has biased composition (basic and acidic residues). Asn-206 is a glycosylation site (N-linked (GlcNAc...) asparagine). Positions 235 to 252 (TPDTSTTQHNKVSTSPKI) are enriched in polar residues. Residues Thr-240 and Thr-253 are each glycosylated (O-linked (GalNAc...) threonine). Residues 266-276 (PNSDTSKETSL) show a composition bias toward polar residues. 3 O-linked (GalNAc...) threonine glycosylation sites follow: Thr-277, Thr-291, and Thr-305. Residue Ser-306 is glycosylated (O-linked (GalNAc...) serine). Thr-310 carries O-linked (GalNAc...) threonine glycosylation. O-linked (GalNAc...) serine glycosylation is present at Ser-317. O-linked (GalNAc...) threonine glycosylation is found at Thr-324, Thr-332, and Thr-338. Composition is skewed to low complexity over residues 329-348 (AKPT…TTPK) and 356-405 (KEPA…KEPA). Residues 348–355 (KEPTPTTP) form repeat 1. Residues 348–855 (KEPTPTTPKE…TPETPPPTTS (508 aa)) form a 59 X 8 AA repeats of K-X-P-X-P-T-T-X region. A 2; approximate repeat occupies 356–363 (KEPASTTP). The stretch at 364 to 371 (KEPTPTTI) is repeat 3. The O-linked (GalNAc...) threonine glycan is linked to Thr-367. Residues 372–378 (KSAPTTP) form a 4; approximate repeat. Ser-373 is a glycosylation site (O-linked (GalNAc...) serine). Thr-376, Thr-384, and Thr-385 each carry an O-linked (GalNAc...) threonine glycan. Repeat unit 5 spans residues 379–386 (KEPAPTTT). One copy of the 6; approximate repeat lies at 387–393 (KSAPTTP). Ser-388 carries O-linked (GalNAc...) serine glycosylation. Thr-391, Thr-399, Thr-400, Thr-407, Thr-408, Thr-415, and Thr-423 each carry an O-linked (GalNAc...) threonine glycan. 4 consecutive repeat copies span residues 394-401 (KEPAPTTT), 402-409 (KEPAPTTP), 410-417 (KEPAPTTT), and 418-425 (KEPAPTTT). Residues 413 to 431 (APTTTKEPAPTTTKSAPTT) show a composition bias toward low complexity. One copy of the 11; approximate repeat lies at 426–432 (KSAPTTP). An O-linked (GalNAc...) serine glycan is attached at Ser-427. Thr-430, Thr-438, Thr-439, Thr-446, Thr-447, Thr-454, and Thr-455 each carry an O-linked (GalNAc...) threonine glycan. Pro residues-rich tracts occupy residues 432-467 (PKEP…PKEP) and 476-506 (PTTP…PKEP). 4 tandem repeats follow at residues 433–440 (KEPAPTTP), 441–448 (KKPAPTTP), 449–456 (KEPAPTTP), and 457–464 (KEPTPTTP). The 16; approximate repeat unit spans residues 465 to 471 (KEPAPTT). Copy 17 of the repeat occupies 472 to 479 (KEPAPTTP). O-linked (GalNAc...) threonine glycosylation is found at Thr-477, Thr-478, Thr-485, Thr-493, Thr-494, Thr-501, Thr-502, and Thr-509. An 18; approximate repeat occupies 480–487 (KEPAPTAP). The 19; approximate repeat unit spans residues 488–495 (KKPAPTTP). 4 consecutive repeat copies span residues 496 to 503 (KEPAPTTP), 504 to 511 (KEPAPTTT), 512 to 519 (KEPSPTTP), and 520 to 527 (KEPAPTTT). Over residues 523 to 561 (APTTTKSAPTTTKEPAPTTTKSAPTTPKEPSPTTTKEPA) the composition is skewed to low complexity. O-linked (GalNAc...) threonine glycosylation occurs at Thr-525. The stretch at 528–534 (KSAPTTT) is one 24; approximate repeat. Residue Ser-529 is glycosylated (O-linked (GalNAc...) serine). Residues Thr-532, Thr-540, and Thr-541 are each glycosylated (O-linked (GalNAc...) threonine). Repeat 25 spans residues 535–542 (KEPAPTTT). A 26; approximate repeat occupies 543-549 (KSAPTTP). Tandem repeats lie at residues 550–557 (KEPSPTTT), 558–565 (KEPAPTTP), 566–573 (KEPAPTTP), 574–581 (KKPAPTTP), 582–589 (KEPAPTTP), and 590–597 (KEPAPTTT). Ser-553 carries an O-linked (GalNAc...) serine glycan. Thr-555, Thr-563, Thr-564, Thr-571, Thr-572, Thr-579, Thr-580, Thr-587, Thr-588, Thr-595, Thr-603, Thr-604, Thr-611, Thr-612, Thr-616, Thr-619, and Thr-627 each carry an O-linked (GalNAc...) threonine glycan. Residues 562–592 (PTTPKEPAPTTPKKPAPTTPKEPAPTTPKEP) show a composition bias toward pro residues. One copy of the 33; approximate repeat lies at 598–605 (KKPAPTTP). The span at 602-611 (PTTPKEPAPT) shows a compositional bias: pro residues. Repeat unit 34 spans residues 606 to 613 (KEPAPTTP). Positions 612–636 (TPKETAPTTPKKLTPTTPEKLAPTT) are enriched in low complexity. A 35; approximate repeat occupies 614–621 (KETAPTTP). Residues 622–629 (KKLTPTTP) form a 36; approximate repeat. One copy of the 37; approximate repeat lies at 638 to 645 (EKPAPTTP). Residues 653–667 (PEEPTPTTPEEPAPT) are compositionally biased toward pro residues. The 38; approximate repeat unit spans residues 662-669 (EEPAPTTP). O-linked (GalNAc...) threonine glycosylation is found at Thr-676, Thr-683, Thr-684, Thr-691, Thr-692, Thr-699, Thr-700, Thr-704, and Thr-707. A compositionally biased stretch (pro residues) spans 677–699 (PKEPAPTTPKEPAPTTPKEPAPT). Repeat copies occupy residues 678–685 (KEPAPTTP), 686–693 (KEPAPTTP), and 694–701 (KEPAPTTP). Low complexity predominate over residues 700 to 721 (TPKETAPTTPKGTAPTTLKEPA). The stretch at 702–709 (KETAPTTP) is one 42; approximate repeat. One copy of the 43; approximate repeat lies at 710–717 (KGTAPTTL). Repeat unit 44 spans residues 718–725 (KEPAPTTP). Thr-723, Thr-724, and Thr-736 each carry an O-linked (GalNAc...) threonine glycan. Over residues 728–761 (PAPKELAPTTTKEPTSTTSDKPAPTTPKGTAPTT) the composition is skewed to low complexity. Residues 731 to 738 (KELAPTTT) form a 45; approximate repeat. A 46; approximate repeat occupies 739-746 (KEPTSTTS). Residues 747-754 (DKPAPTTP) form a 47; approximate repeat. One copy of the 48; approximate repeat lies at 755 to 762 (KGTAPTTP). Over residues 762–776 (PKEPAPTTPKEPAPT) the composition is skewed to pro residues. 2 tandem repeats follow at residues 763–770 (KEPAPTTP) and 771–778 (KEPAPTTP). Thr-768, Thr-769, Thr-776, and Thr-777 each carry an O-linked (GalNAc...) threonine glycan. Residues 777-790 (TPKGTAPTTLKEPA) are compositionally biased toward low complexity. A 51; approximate repeat occupies 779–786 (KGTAPTTL). The stretch at 787 to 794 (KEPAPTTP) is repeat 52. 3 O-linked (GalNAc...) threonine glycosylation sites follow: Thr-792, Thr-793, and Thr-805. Positions 797-830 (PAPKELAPTTTKGPTSTTSDKPAPTTPKETAPTT) are enriched in low complexity. One copy of the 53; approximate repeat lies at 800–807 (KELAPTTT). Residues 808–815 (KGPTSTTS) form a 54; approximate repeat. Residue Ser-812 is glycosylated (O-linked (GalNAc...) serine). Residues 816 to 823 (DKPAPTTP) form a 55; approximate repeat. The 56; approximate repeat unit spans residues 824 to 831 (KETAPTTP). O-linked (GalNAc...) threonine glycosylation is found at Thr-829, Thr-837, and Thr-838. The segment covering 831–853 (PKEPAPTTPKKPAPTTPETPPPT) has biased composition (pro residues). 2 tandem repeats follow at residues 832–839 (KEPAPTTP) and 840–847 (KKPAPTTP). A 59; approximate repeat occupies 848–855 (ETPPPTTS). A compositionally biased stretch (low complexity) spans 854–866 (TSEVSTPTTTKEP). O-linked (GalNAc...) serine glycosylation occurs at Ser-892. The segment covering 899–914 (PTTKTPAATKPEMTTT) has biased composition (low complexity). An O-linked (GalNAc...) threonine glycan is attached at Thr-900. Basic and acidic residues predominate over residues 915–926 (AKDKTTERDLRT). Over residues 927–966 (TPETTTAAPKMTKETATTTEKTTESKITATTTQVTSTTTQ) the composition is skewed to low complexity. Residues Thr-930 and Thr-931 are each glycosylated (O-linked (GalNAc...) threonine). The O-linked (GalNAc...) serine glycan is linked to Ser-962. O-linked (GalNAc...) threonine glycans are attached at residues Thr-963, Thr-968, Thr-975, Thr-978, Thr-979, and Thr-980. Positions 992–1104 (ITTTEIMNKP…EDAGGAEGET (113 aa)) are disordered. Basic and acidic residues predominate over residues 999 to 1012 (NKPEETAKPKDRAT). Positions 1026–1047 (KAPKKPTSTKKPKTMPRVRKPK) are enriched in basic residues. An O-linked (GalNAc...) threonine glycan is attached at Thr-1039. Over residues 1048-1060 (TTPTPRKMTSTMP) the composition is skewed to low complexity. Polar residues predominate over residues 1073 to 1085 (LQTTTRPNQTPNS). A disulfide bridge links Cys-1146 with Cys-1403. Hemopexin repeat units follow at residues 1148–1191 (GKPV…VWGI) and 1192–1239 (PSPI…FGGL). N-linked (GlcNAc...) asparagine glycosylation is present at Asn-1159. An O-linked (GalNAc...) threonine glycan is attached at Thr-1161.

As to quaternary structure, homodimer; disulfide-linked. Post-translationally, N-glycosylated. In terms of processing, O-glycosylated; contains glycosaminoglycan chondroitin sulfate and keratan sulfate. O-glycosylated with sialylated oligosaccharides which are predominantly represented by the monosialylated core type I structure, NeuNAcalpha2-3Galbeta1-3GalNAc, with smaller amounts of disialylated O-glycans. The disulfide bond between Cys-1146 and Cys-1403 is essential for protein cleavage. Post-translationally, proteolytically cleaved by cathepsin CTSG. Highly expressed in synovial tissue, cartilage and liver and weakly in heart and lung. Isoform B is expressed in kidney, lung, liver, heart and brain. Isoform C and isoform D are widely expressed.

The protein resides in the secreted. Functionally, plays a role in boundary lubrication within articulating joints. Prevents protein deposition onto cartilage from synovial fluid by controlling adhesion-dependent synovial growth and inhibiting the adhesion of synovial cells to the cartilage surface. Isoform F plays a role as a growth factor acting on the primitive cells of both hematopoietic and endothelial cell lineages. The polypeptide is Proteoglycan 4 (PRG4) (Homo sapiens (Human)).